Here is an 841-residue protein sequence, read N- to C-terminus: Follistatin-related protein 4 (841 aa).

The first 22 residues, 1 to 22 (MKPGGFWPHLALLGVSLPAVLG), serve as a signal peptide directing secretion. A disordered region spans residues 29–54 (SRSPNMVPGESQAEETRGFEVTRREG). Over residues 42–54 (EETRGFEVTRREG) the composition is skewed to basic and acidic residues. The 55-residue stretch at 80–134 (TTGQPSCQCLEVCRPRYMPVCGSDGRLYGNHCELRRAACLLGKRIVSVHSKDCFL) folds into the Kazal-like domain. 3 disulfide bridges follow: Cys86–Cys118, Cys92–Cys111, and Cys100–Cys132. EF-hand domains lie at 173–208 (QKRL…EQDM) and 225–247 (DYNS…IQLS). Residues Asp186, Asp188, Asn190, His192, Glu197, Asp225, Asn227, Asp229, Ser231, and Glu236 each contribute to the Ca(2+) site. Ig-like domains follow at residues 250-336 (PEDK…VLQV) and 340-425 (PVIR…EDIS). Disulfide bonds link Cys269/Cys320 and Cys361/Cys412. An N-linked (GlcNAc...) asparagine glycan is attached at Asn317.

Its subcellular location is the secreted. In Mus musculus (Mouse), this protein is Follistatin-related protein 4 (Fstl4).